A 157-amino-acid chain; its full sequence is Small ribosomal subunit protein uS7 (157 aa).

This sequence belongs to the universal ribosomal protein uS7 family. As to quaternary structure, part of the 30S ribosomal subunit. Contacts proteins S9 and S11.

Functionally, one of the primary rRNA binding proteins, it binds directly to 16S rRNA where it nucleates assembly of the head domain of the 30S subunit. Is located at the subunit interface close to the decoding center, probably blocks exit of the E-site tRNA. In Chlamydia trachomatis serovar L2 (strain ATCC VR-902B / DSM 19102 / 434/Bu), this protein is Small ribosomal subunit protein uS7.